Here is a 449-residue protein sequence, read N- to C-terminus: Glucose-6-phosphate isomerase (449 aa).

Catalysis depends on E291, which acts as the Proton donor. Catalysis depends on residues H312 and K426.

Belongs to the GPI family.

Its subcellular location is the cytoplasm. It catalyses the reaction alpha-D-glucose 6-phosphate = beta-D-fructose 6-phosphate. Its pathway is carbohydrate biosynthesis; gluconeogenesis. It functions in the pathway carbohydrate degradation; glycolysis; D-glyceraldehyde 3-phosphate and glycerone phosphate from D-glucose: step 2/4. Catalyzes the reversible isomerization of glucose-6-phosphate to fructose-6-phosphate. The chain is Glucose-6-phosphate isomerase from Pediococcus pentosaceus (strain ATCC 25745 / CCUG 21536 / LMG 10740 / 183-1w).